A 326-amino-acid polypeptide reads, in one-letter code: Photosystem II assembly factor Ycf39 (326 aa).

It belongs to the NmrA-type oxidoreductase family. Ycf39 subfamily. As to quaternary structure, purified in several chlorophyll- and carotenoid-containing complexes, including photosystem II (PSII) assembly intermediate complex RCII* (iD1, D1, D2, PsbE, PsbF, PsbI, Ycf39, Ycf48, HliC and HliD) and the Ycf39-Hlip complex (Ycf39, HliC, HliD and pigments). Tagged protein does not pull down mature PSII.

The protein resides in the cellular thylakoid membrane. In terms of biological role, requires HliD to bind pigments. The Ycf39-Hlip complex binds D1 at an early stage of PSII assembly along with Ycf48, ribosomes and ChlG, the last enzyme in chlorophyll biosynthesis; it may be involved in chlorophyll reuse and delivery to D1 in the initial stages of PSII assembly. The Ycf39-Hlip complex efficiently quenches chlorophyll fluorescence, contributing to photoprotection. This is Photosystem II assembly factor Ycf39 from Synechocystis sp. (strain ATCC 27184 / PCC 6803 / Kazusa).